The sequence spans 85 residues: RDS3 complex subunit 10 (85 aa).

Belongs to the SF3b complex composed of CUS1, HSH49, HSH155, RCP1, RDS3 and RSE1.

Its subcellular location is the nucleus. Functionally, involved in pre-mRNA splicing. Required for the SF3b integrity and prespliceosome assembly. This Saccharomyces cerevisiae (strain ATCC 204508 / S288c) (Baker's yeast) protein is RDS3 complex subunit 10 (YSF3).